Here is a 306-residue protein sequence, read N- to C-terminus: Elongation factor Ts (306 aa).

The interval 80 to 83 (TDFV) is involved in Mg(2+) ion dislocation from EF-Tu.

Belongs to the EF-Ts family.

It localises to the cytoplasm. In terms of biological role, associates with the EF-Tu.GDP complex and induces the exchange of GDP to GTP. It remains bound to the aminoacyl-tRNA.EF-Tu.GTP complex up to the GTP hydrolysis stage on the ribosome. This chain is Elongation factor Ts, found in Clostridium novyi (strain NT).